Here is a 424-residue protein sequence, read N- to C-terminus: MFGPQIRRVKLEKQSELRIELQPTSPLRLRLLDGKAEIFGYELPHEVWITFPPLMTFAVFTWYGATIEIDGITGNEYISCETPMVNYLGLHNSLQVQRHRVTSSTRDSASSQEGPRVIIVGDIDSGKSTLAKMLLNWAVKDGWKPTFVDLNVGQSSITIPGTIAAAPIKMLVDPVEGFPLDKALIHYFGLTNPSVNLRLYRTLVEELARELKEEFSANAESRASGMVIDTMGFIVREGYALLLHAIRTFNASLVIVVGQEEKLVYDLKKNLKFKKNLQVLNLEKSEGVFSRSSDFRKTLRNSNIQNYFYGVTNDLTVYTKTVKFSDVQVYRIGDFRVSGSTSAHQRGNDPLKITLVTIDEHLVNKVLAISYAIKPDQIISSIVAGFVCIKNVDISEERITYVSPSAAELPSKILILGTLTWHVT.

ATP is bound by residues Glu-16, Thr-56, and 124–129; that span reads DSGKST.

The protein belongs to the Clp1 family. Clp1 subfamily. Forms a complex with cleavage and polyadenylation specificity factor (CPSF) subunits PCFS1, FIPS3 and CPSF30.

It is found in the nucleus. Its function is as follows. Required for endonucleolytic cleavage during polyadenylation-dependent pre-mRNA 3'-end formation. The polypeptide is Protein CLP1 homolog 5 (Arabidopsis thaliana (Mouse-ear cress)).